Consider the following 163-residue polypeptide: Photosystem II extrinsic protein V (163 aa).

The signal sequence occupies residues 1-26 (MLKRSSWLAALLGLLTVVSTSTHTYA). Residues C63, C66, H67, and H118 each contribute to the heme c site.

The protein belongs to the cytochrome c family. PsbV subfamily. In terms of assembly, PSII is composed of 1 copy each of membrane proteins PsbA, PsbB, PsbC, PsbD, PsbE, PsbF, PsbH, PsbI, PsbJ, PsbK, PsbL, PsbM, PsbT, PsbY, PsbZ, Psb30/Ycf12, at least 3 peripheral proteins of the oxygen-evolving complex and a large number of cofactors. It forms dimeric complexes. The extrinsic subunits in red algae are PsbO (OEC33), PsbQ', cytochrome c-550 and PsbU. The cofactor is heme c.

It localises to the plastid. Its subcellular location is the chloroplast thylakoid membrane. Its function is as follows. One of the extrinsic, lumenal subunits of photosystem II (PSII). PSII is a light-driven water plastoquinone oxidoreductase, using light energy to abstract electrons from H(2)O, generating a proton gradient subsequently used for ATP formation. The extrinsic proteins stabilize the structure of photosystem II oxygen-evolving complex (OEC), the ion environment of oxygen evolution and protect the OEC against heat-induced inactivation. This chain is Photosystem II extrinsic protein V, found in Pyropia yezoensis (Susabi-nori).